The following is a 778-amino-acid chain: Preasperterpenoid A synthase PvPS (778 aa).

The terpene cyclase stretch occupies residues 1-414 (MAATKKSTAT…HRYNFHKPAA (414 aa)). The Mg(2+) site is built by D176 and D180. D176 contributes to the substrate binding site. Positions 176-180 (DDILD) match the DDXXD 1 motif. Residues 266 to 269 (RVIN), N310, 314 to 318 (SWEKE), and 406 to 407 (RY) contribute to the substrate site. Residues 310 to 318 (NDYFSWEKE) carry the NSE/DTE motif. Residues 414-431 (AKENEDTDDEGAKSDDSK) show a composition bias toward basic and acidic residues. A prenyltransferase region spans residues 415–778 (KENEDTDDEG…LRLLLKRLQV (364 aa)). A disordered region spans residues 416–454 (ENEDTDDEGAKSDDSKTTLNDSTDSTVVDVKTPATSGLL). Isopentenyl diphosphate is bound by residues K499, R502, and H531. 2 residues coordinate Mg(2+): D538 and D542. Residues 538–542 (DDIED) carry the DDXXD 2 motif. A dimethylallyl diphosphate-binding site is contributed by R547. R548 serves as a coordination point for isopentenyl diphosphate. K625, T626, Q662, N669, K679, and K689 together coordinate dimethylallyl diphosphate.

The protein in the N-terminal section; belongs to the terpene synthase family. It in the C-terminal section; belongs to the FPP/GGPP synthase family. As to quaternary structure, hexamer. It depends on Mg(2+) as a cofactor.

It carries out the reaction isopentenyl diphosphate + (2E,6E)-farnesyl diphosphate = (2E,6E,10E)-geranylgeranyl diphosphate + diphosphate. The enzyme catalyses isopentenyl diphosphate + (2E,6E,10E)-geranylgeranyl diphosphate = (2E,6E,10E,14E)-geranylfarnesyl diphosphate + diphosphate. The catalysed reaction is (2E,6E,10E,14E)-geranylfarnesyl diphosphate = preasperterpenoid A + diphosphate. It participates in secondary metabolite biosynthesis; terpenoid biosynthesis. Bifunctional sesterterpene synthase that possesses both prenyl transferase and terpene cyclase activity, converting isopentenyl diphosphate and dimethylallyl diphosphate into geranylfarnesyl diphosphate (GFPP) and further converting GFPP into preasperterpenoid A. The sequence is that of Preasperterpenoid A synthase PvPS from Talaromyces verruculosus (Penicillium verruculosum).